The primary structure comprises 139 residues: Protein archease (139 aa).

Ca(2+)-binding residues include aspartate 12, aspartate 138, and isoleucine 139.

This sequence belongs to the archease family.

Activates the tRNA-splicing ligase complex by facilitating the enzymatic turnover of catalytic subunit RtcB. Acts by promoting the guanylylation of RtcB, a key intermediate step in tRNA ligation. Can also alter the NTP specificity of RtcB such that ATP, dGTP or ITP is used efficiently. The sequence is that of Protein archease from Saccharolobus islandicus (strain M.16.27) (Sulfolobus islandicus).